We begin with the raw amino-acid sequence, 964 residues long: Collagen alpha-1(I) chain (964 aa).

The tract at residues 1 to 964 (GGISVPGPMG…PGPPGPPGPP (964 aa)) is disordered. 11 positions are modified to 4-hydroxyproline: Pro18, Pro21, Pro24, Pro33, Pro36, Pro39, Pro53, Pro68, Pro74, Pro83, and Pro89. The span at 56 to 70 (NGDDGEAGKPGRPGE) shows a compositional bias: basic and acidic residues. The residue at position 92 (Lys92) is a 5-hydroxylysine; alternate. Residue Lys92 is glycosylated (O-linked (Gal...) hydroxylysine; alternate). Phosphoserine is present on Ser98. Low complexity-rich tracts occupy residues 106–117 (DAGPAGPKQMGP) and 126–144 (PGAS…TGAA). 4-hydroxyproline occurs at positions 126, 147, 156, 159, 186, 189, 201, 207, 216, 222, 225, and 240. Over residues 146 to 158 (PPGPTGPAGPPGF) the composition is skewed to pro residues. The span at 192–231 (AGAAGPAGNPGADGQPGAKGANGAPGIAGAPGFPGARGPS) shows a compositional bias: low complexity. Lys243 is modified (5-hydroxylysine). 4-hydroxyproline occurs at positions 249, 252, 260, 269, 284, 290, 299, and 305. Positions 294-303 (GERGGPGSRG) are enriched in gly residues. Residue Lys314 is modified to 5-hydroxylysine. 4-hydroxyproline is present on residues Pro323, Pro332, Pro338, Pro344, Pro353, Pro356, Pro365, Pro374, Pro379, Pro391, Pro400, Pro409, Pro412, Pro430, Pro447, Pro453, Pro459, Pro465, Pro471, Pro477, Pro489, Pro498, Pro510, and Pro519. The segment covering 347–373 (KGLTGSPGSPGPDGKTGPPGPAGQDGR) has biased composition (low complexity). Over residues 381-400 (ARGQAGVMGFPGPKGAAGEP) the composition is skewed to low complexity. Residues 459 to 468 (PGEAGKPGEQ) show a composition bias toward low complexity. A 5-hydroxylysine modification is found at Lys531. 4-hydroxyproline is present on residues Pro537, Pro552, and Pro558. Residues 564-578 (SGPSGPAGPTGARGA) are compositionally biased toward low complexity. At Ser567 the chain carries Phosphoserine. Pro579, Pro585, Pro588, Pro597, Pro603, Pro621, Pro630, and Pro639 each carry 4-hydroxyproline. A compositionally biased stretch (low complexity) spans 591–618 (AGFAGPPGADGQPGAKGEPGDAGAKGDA). Over residues 620 to 632 (PPGPAGPTGPPGP) the composition is skewed to pro residues. Lys642 is modified (5-hydroxylysine). Residues 647–663 (SAGPPGATGFPGAAGRV) show a composition bias toward low complexity. A 4-hydroxyproline mark is found at Pro651 and Pro657. Pro665 is modified (3-hydroxyproline). 4-hydroxyproline occurs at positions 666, 675, 678, 704, 712, 721, 739, 748, 751, 757, 772, 778, 784, 792, and 798. Positions 709-721 (KGSPGADGPAGAP) are enriched in low complexity. A compositionally biased stretch (pro residues) spans 771-781 (PPGPMGPPGLA). Lys807 carries the post-translational modification 5-hydroxylysine. Over residues 815 to 830 (PGPPGAPGAPGAPGPV) the composition is skewed to pro residues. A 4-hydroxyproline mark is found at Pro818, Pro821, and Pro824. Low complexity predominate over residues 850–864 (AGPAGARGPAGPQGP). Basic and acidic residues predominate over residues 865 to 879 (RGDKGETGEQGDRGI). At Lys868 the chain carries 5-hydroxylysine. 5-hydroxylysine; alternate is present on Lys880. The O-linked (Gal...) hydroxylysine; alternate glycan is linked to Lys880. A 4-hydroxyproline mark is found at Pro895, Pro898, Pro916, and Pro931. Over residues 898 to 931 (PGEQGPSGASGPAGPRGPPGSAGSPGKDGLNGLP) the composition is skewed to low complexity. At Pro936 the chain carries 3-hydroxyproline. Position 937 is a 4-hydroxyproline (Pro937). The segment covering 949–964 (VGPPGPPGPPGPPGPP) has biased composition (pro residues). 3-hydroxyproline is present on Pro951. Pro952 bears the 4-hydroxyproline mark. Pro954 carries the 3-hydroxyproline modification. A 4-hydroxyproline modification is found at Pro955. 3-hydroxyproline is present on Pro957. A 4-hydroxyproline mark is found at Pro958, Pro961, and Pro964.

It belongs to the fibrillar collagen family. In terms of assembly, trimers of one alpha 2(I) and two alpha 1(I) chains. Post-translationally, contains mostly 4-hydroxyproline. Proline residues at the third position of the tripeptide repeating unit (G-X-Y) are hydroxylated in some or all of the chains. Contains 3-hydroxyproline at a few sites. This modification occurs on the first proline residue in the sequence motif Gly-Pro-Hyp, where Hyp is 4-hydroxyproline. In terms of processing, lysine residues at the third position of the tripeptide repeating unit (G-X-Y) are 5-hydroxylated in some or all of the chains. Post-translationally, O-glycosylated on hydroxylated lysine residues. The O-linked glycan consists of a Glc-Gal disaccharide. Expressed in bones.

It is found in the secreted. The protein localises to the extracellular space. It localises to the extracellular matrix. Functionally, type I collagen is a member of group I collagen (fibrillar forming collagen). This is Collagen alpha-1(I) chain from Parocnus serus (Greater Haitian ground sloth).